A 379-amino-acid chain; its full sequence is Cytochrome b (379 aa).

A run of 4 helical transmembrane segments spans residues 33 to 53, 77 to 98, 113 to 133, and 178 to 198; these read FGSLLGLCLIIQIASGLFLDM, WLIRYIHANGASLFFVCLYLHI, WNIGIILLFLTMATAFMGYVL, and FFAFHFILPFIIAAMAMVHLL. Heme b is bound by residues His83 and His97. Heme b is bound by residues His182 and His196. His201 is an a ubiquinone binding site. 4 consecutive transmembrane segments (helical) span residues 226 to 246, 288 to 308, 320 to 340, and 347 to 367; these read TKDFLGIVLLLTFFFTMVPFF, LGGVIALILSILILALLPHIQ, ISQFLFWLLVSDVLVLTWIGG, and FIIIGQIASLSYFTIILVLMP.

This sequence belongs to the cytochrome b family. As to quaternary structure, the cytochrome bc1 complex contains 11 subunits: 3 respiratory subunits (MT-CYB, CYC1 and UQCRFS1), 2 core proteins (UQCRC1 and UQCRC2) and 6 low-molecular weight proteins (UQCRH/QCR6, UQCRB/QCR7, UQCRQ/QCR8, UQCR10/QCR9, UQCR11/QCR10 and a cleavage product of UQCRFS1). This cytochrome bc1 complex then forms a dimer. It depends on heme b as a cofactor.

The protein localises to the mitochondrion inner membrane. Its function is as follows. Component of the ubiquinol-cytochrome c reductase complex (complex III or cytochrome b-c1 complex) that is part of the mitochondrial respiratory chain. The b-c1 complex mediates electron transfer from ubiquinol to cytochrome c. Contributes to the generation of a proton gradient across the mitochondrial membrane that is then used for ATP synthesis. In Dipodomys nelsoni (Nelson's kangaroo rat), this protein is Cytochrome b (MT-CYB).